Consider the following 146-residue polypeptide: Cyanate hydratase (146 aa).

Residues Arg-87, Glu-90, and Ser-113 contribute to the active site.

This sequence belongs to the cyanase family.

It carries out the reaction cyanate + hydrogencarbonate + 3 H(+) = NH4(+) + 2 CO2. In terms of biological role, catalyzes the reaction of cyanate with bicarbonate to produce ammonia and carbon dioxide. This is Cyanate hydratase from Teredinibacter turnerae (strain ATCC 39867 / T7901).